We begin with the raw amino-acid sequence, 316 residues long: Transaldolase (316 aa).

The active-site Schiff-base intermediate with substrate is the lysine 125.

The protein belongs to the transaldolase family. Type 1 subfamily. In terms of assembly, homodimer.

The protein resides in the cytoplasm. The catalysed reaction is D-sedoheptulose 7-phosphate + D-glyceraldehyde 3-phosphate = D-erythrose 4-phosphate + beta-D-fructose 6-phosphate. The protein operates within carbohydrate degradation; pentose phosphate pathway; D-glyceraldehyde 3-phosphate and beta-D-fructose 6-phosphate from D-ribose 5-phosphate and D-xylulose 5-phosphate (non-oxidative stage): step 2/3. In terms of biological role, transaldolase is important for the balance of metabolites in the pentose-phosphate pathway. In Verminephrobacter eiseniae (strain EF01-2), this protein is Transaldolase.